A 201-amino-acid chain; its full sequence is Small ribosomal subunit protein uS4c (201 aa).

The segment at 13 to 43 (RRLGDLPGLSRKAIKRPYPPGEHGQKPRKPS) is disordered. The region spanning 90-154 (MRLDNTIFRL…SKQLVESYLA (65 aa)) is the S4 RNA-binding domain.

The protein belongs to the universal ribosomal protein uS4 family. Part of the 30S ribosomal subunit. Contacts protein S5. The interaction surface between S4 and S5 is involved in control of translational fidelity.

It localises to the plastid. The protein resides in the chloroplast. Functionally, one of the primary rRNA binding proteins, it binds directly to 16S rRNA where it nucleates assembly of the body of the 30S subunit. With S5 and S12 plays an important role in translational accuracy. In Porphyra purpurea (Red seaweed), this protein is Small ribosomal subunit protein uS4c (rps4).